Consider the following 842-residue polypeptide: G-type lectin S-receptor-like serine/threonine-protein kinase At1g11330 (842 aa).

The signal sequence occupies residues 1–29; sequence MVVSVTIRRRFVLLLLACTCLLSRRLCFG. Residues 30–444 are Extracellular-facing; sequence EDRITFSSPI…AHSELKTHSN (415 aa). Residues 32 to 157 enclose the Bulb-type lectin domain; the sequence is RITFSSPIKD…RNNGEILWES (126 aa). 6 N-linked (GlcNAc...) asparagine glycosylation sites follow: N63, N94, N122, N130, N196, and N260. The 37-residue stretch at 294 to 330 folds into the EGF-like; atypical domain; sequence PYTDCDAYGRCGRFGSCHAGENPPCKCVKGFVPKNNT. 2 cysteine pairs are disulfide-bonded: C298–C310 and C304–C318. Residues N328, N336, N354, and N396 are each glycosylated (N-linked (GlcNAc...) asparagine). A PAN domain is found at 349-435; the sequence is CERQRNVSNG…SGIDLFIRVA (87 aa). Disulfide bonds link C389/C410 and C393/C399. The helical transmembrane segment at 445-465 threads the bilayer; sequence LAVMIAAPVIGVMLIAAVCVL. Residues 466–842 are Cytoplasmic-facing; the sequence is LACRKYKKRP…DVSLTAVTGR (377 aa). Residues 524-810 form the Protein kinase domain; sequence FSLRNKLGQG…SLADPKQPAF (287 aa). ATP is bound by residues 530–538 and K552; that span reads LGQGGFGPV. S558 and S573 each carry phosphoserine. The segment at 613–630 is caM-binding; sequence MKQKILDWKTRFNIMEGI. The active-site Proton acceptor is D649. Residues S653 and S666 each carry the phosphoserine modification. The residue at position 683 (T683) is a Phosphothreonine. Phosphoserine is present on residues S726, S727, S821, and S830. Positions 814 to 842 are disordered; it reads RGASEAESSDQSSQKVSINDVSLTAVTGR. Residues 818–827 are compositionally biased toward low complexity; that stretch reads EAESSDQSSQ. The span at 828 to 842 shows a compositional bias: polar residues; that stretch reads KVSINDVSLTAVTGR. At T837 the chain carries Phosphothreonine.

The protein belongs to the protein kinase superfamily. Ser/Thr protein kinase family.

The protein resides in the cell membrane. It carries out the reaction L-seryl-[protein] + ATP = O-phospho-L-seryl-[protein] + ADP + H(+). It catalyses the reaction L-threonyl-[protein] + ATP = O-phospho-L-threonyl-[protein] + ADP + H(+). This Arabidopsis thaliana (Mouse-ear cress) protein is G-type lectin S-receptor-like serine/threonine-protein kinase At1g11330.